The sequence spans 316 residues: Glucan endo-1,3-beta-glucosidase GV (316 aa).

Glu-99 serves as the catalytic Proton donor. Glu-239 acts as the Nucleophile in catalysis.

It belongs to the glycosyl hydrolase 17 family.

The protein localises to the cytoplasm. It carries out the reaction Hydrolysis of (1-&gt;3)-beta-D-glucosidic linkages in (1-&gt;3)-beta-D-glucans.. May provide a degree of protection against microbial invasion of germinated barley grain through its ability to degrade fungal cell wall polysaccharides. In Hordeum vulgare (Barley), this protein is Glucan endo-1,3-beta-glucosidase GV.